The chain runs to 367 residues: Cytochrome-c peroxidase IdrP2 (367 aa).

The signal sequence occupies residues 1 to 28 (MTTHQSIRRLSRIAALVGLAFVAGTVAA). Cytochrome c domains are found at residues 47–157 (DMVE…AMWQ) and 200–345 (SQQK…EALS). Heme c contacts are provided by cysteine 69, cysteine 72, histidine 73, cysteine 215, cysteine 218, and histidine 219.

In terms of assembly, the iodate reductase (Idr) complex is composed of a molybdopterin-dependent iodate reductase (IdrA and IdrB subunits) and two associated peroxidases (IdrP1 and IdrP2). The cofactor is heme c.

It is found in the periplasm. It catalyses the reaction 2 Fe(II)-[cytochrome c] + H2O2 + 2 H(+) = 2 Fe(III)-[cytochrome c] + 2 H2O. Involved in iodate respiration. May play a critical role in detoxification of inadvertent H(2)O(2) generated by the iodate reductase IdrA/IdrB. This Denitromonas iodatirespirans protein is Cytochrome-c peroxidase IdrP2.